The primary structure comprises 415 residues: Casein kinase 1-like protein 3 (415 aa).

The Protein kinase domain maps to Tyr9 to Phe277. ATP is bound by residues Ile15–Ile23 and Lys38. Asp128 (proton acceptor) is an active-site residue. 2 stretches are compositionally biased toward polar residues: residues Asn303–Pro314 and Asn373–Lys415. Disordered regions lie at residues Asn303–Ile330 and Asn344–Lys415.

This sequence belongs to the protein kinase superfamily. CK1 Ser/Thr protein kinase family. Casein kinase I subfamily. In terms of processing, slightly autophosphorylated. Expressed in seedlings, stems, leaves and flowers.

The protein resides in the cytoplasm. It is found in the nucleus. The catalysed reaction is L-seryl-[protein] + ATP = O-phospho-L-seryl-[protein] + ADP + H(+). It catalyses the reaction L-threonyl-[protein] + ATP = O-phospho-L-threonyl-[protein] + ADP + H(+). Functionally, protein kinase involved in blue light responses (e.g. hypocotyl elongation and flowering) by phosphorylating CRY2 to reduce its stability. The sequence is that of Casein kinase 1-like protein 3 from Arabidopsis thaliana (Mouse-ear cress).